The following is a 440-amino-acid chain: FAD-dependent monooxygenase afoD (440 aa).

The helical transmembrane segment at 10 to 30 threads the bilayer; it reads PLSIAIIGGGIIGLMTALGLL. FAD-binding residues include Glu-41, Leu-145, and Asp-320. An N-linked (GlcNAc...) asparagine glycan is attached at Asn-352.

This sequence belongs to the paxM FAD-dependent monooxygenase family. Requires FAD as cofactor.

The protein localises to the membrane. FAD-dependent monooxygenase; part of the gene cluster that mediates the biosynthesis of asperfuranone, a probable antitumor agent. The polyketide synthase afoG is responsible for producing the 3,5-dimethyloctadienone moiety from acetyl-CoA, three malonyl-CoA, and two S-adenosyl methionines (SAM). The 3,5-dimethyloctadienone moiety is then loaded onto the SAT domain of afoE and extended with four malonyl-CoA and one SAM, which leads to the formation of 2,4-dihydroxy-6-(5,7-dimethyl-2-oxo-trans-3-trans-5-nonadienyl)-3-methylbenzaldehyde (compound 2) after reductive release and aldol condensation. AfoD is the next enzyme in the biosynthesis sequence and hydroxylates the side chain at the benzylic position of compound 2. After benzylic hydroxylation, a furan ring is formed after five-member ring hemiacetal formation and water elimination. AfoF and afoC are proposed to oxidize the R-diketone proton and to reduce the unconjugated carbonyl group, respectively, to generate asperfuranone. Since no intermediates could be isolated from afoF and afoC deletants, the sequence of these two enzymes is not fully understood. Moreover, since afoC deletant still produces a small amount of asperfuranone, other endogenous oxidoreductases might catalyze the same reaction with much less efficiency. This chain is FAD-dependent monooxygenase afoD, found in Emericella nidulans (strain FGSC A4 / ATCC 38163 / CBS 112.46 / NRRL 194 / M139) (Aspergillus nidulans).